Reading from the N-terminus, the 165-residue chain is Protein SEED AND ROOT HAIR PROTECTIVE PROTEIN (165 aa).

A signal peptide spans 1–24; that stretch reads MAFSRLSFAASLIVFSSLIISSVA.

This sequence belongs to the plant proline-rich protein superfamily. In terms of tissue distribution, root hair and seed specific expression. Also observed in other tissues including siliques, roots and flowers.

The protein localises to the secreted. Its subcellular location is the cell wall. In terms of biological role, contributes to cell wall structure in root hairs and seeds, especially in phosphate (Pi) deprivation conditions or in the presence of ethylene. Particularly important in maternal tissues (pericarps and seed coats) during seed development, especially under stress conditions. Confers thermotolerance in seed germination rate. The polypeptide is Protein SEED AND ROOT HAIR PROTECTIVE PROTEIN (Arabidopsis thaliana (Mouse-ear cress)).